Reading from the N-terminus, the 750-residue chain is MATKIAGGLHRAQEVLQNTSSKSKKLVDLERDTADAHTQQPLTTDHGVRVSNTDQWLRVTNDRRTGPSLLEDQIAREKIHRFDHERIPERVVHARGTGAFGNFKLKESIEDLTYAGVLTDTSRNTPVFVRFSTVQGSRGSADTVRDVRGFAVKFYTDEGNWDIVGNNIPVFFIQDAVKFPDFVHAVKPEPHNEVPQAQTAHNNFWDFVYLHPEATHMFMWAMSDRAIPRSYRMMQGFGVNTFALVNKEGKRHFVKFHWIPHLGVHSLVWDEALKLGGQDPDFHRKDLMEAIDNKAYPKWDFAIQVIPEEKQDDFEFDILDATKIWPEDLVPLRVIGELELNRNVDEFFPQTEQVAFCTSHIVPGIDFTDDPLLQGRNFSYFDTQISRLGINWEELPINRPVCPVLNHNRDGQMRHRITQGTVNYWPNRFEAVPPTGTKGSGVGGGFTTYPQRVEGIKNRALSDKFREHHNQAQLFYNSMSEHEKLHMKKAFSFELDHCDDPTVYERLAGHRLAEIDLELAQKVAEMVGAPIPAKALKQNHGRRAPHLSQTEFIPKNPTIASRRIAIIIGDGYDPVAFTGLKTAIKAASALPFIIGTKRSAIYADGEDKTSSKGIIPDHHYDGQRSTMFDATFIPGGPHVATLRQNGQIKYWISETFGHLKALGATGEAVDLVKETLSGTLDVQVASSQSPEPVEWYGVVTAGGKQKPESFKESVQILKGATDFVGKFFYQISQHRNYQRELDGLASTIAF.

The disordered stretch occupies residues 30–49; it reads ERDTADAHTQQPLTTDHGVR. Catalysis depends on residues histidine 93 and asparagine 166. Residue tyrosine 380 coordinates heme.

Belongs to the catalase family. The cofactor is heme.

It is found in the peroxisome matrix. The enzyme catalyses 2 H2O2 = O2 + 2 H2O. Its function is as follows. Catalyzes the degradation of hydrogen peroxide (H(2)O(2)) generated by peroxisomal oxidases to water and oxygen, thereby protecting cells from the toxic effects of hydrogen peroxide. This Aspergillus fumigatus (strain ATCC MYA-4609 / CBS 101355 / FGSC A1100 / Af293) (Neosartorya fumigata) protein is Catalase A (catA).